Consider the following 78-residue polypeptide: Small ribosomal subunit protein uS17 (78 aa).

It belongs to the universal ribosomal protein uS17 family. Part of the 30S ribosomal subunit.

Its function is as follows. One of the primary rRNA binding proteins, it binds specifically to the 5'-end of 16S ribosomal RNA. This is Small ribosomal subunit protein uS17 from Parvibaculum lavamentivorans (strain DS-1 / DSM 13023 / NCIMB 13966).